The sequence spans 508 residues: Acyl-CoA-binding domain-containing protein 5 (508 aa).

An ACB domain is found at 44 to 133 (YETRFEAAVK…MKKIIETMPM (90 aa)). Residues 55 to 64 (IQSLPKNGSF), 75 to 79 (YSFYK), Lys-101, and Tyr-120 each bind an acyl-CoA. Positions 175–215 (AKAVNGKAESSDSGAESEEEEAQEELKGAEQSGSDDKKTLK) are disordered. Residues 181–214 (KAESSDSGAESEEEEAQEELKGAEQSGSDDKKTL) adopt a coiled-coil conformation. Residues Ser-184, Ser-185, Ser-187, Ser-191, Ser-206, and Ser-233 each carry the phosphoserine modification. Residues 198-215 (EELKGAEQSGSDDKKTLK) are compositionally biased toward basic and acidic residues. The segment covering 240–260 (SDIHTDSSRSTRSSEDEKPGD) has biased composition (basic and acidic residues). The interval 240-300 (SDIHTDSSRS…LTSDSDSEVY (61 aa)) is disordered. Ser-303 carries the post-translational modification Phosphoserine. 2 disordered regions span residues 318–340 (PTQH…NGSI) and 353–419 (EVKH…RGSR). The span at 353 to 376 (EVKHGGEDGRSSSGAPHRETRGGE) shows a compositional bias: basic and acidic residues. Residue Ser-405 is modified to Phosphoserine. Residues 408–418 (DGERWGSDRGS) are compositionally biased toward basic and acidic residues. Residues 428 to 453 (LVLIRLQEDMQNVLQRLHKLETLTAS) adopt a coiled-coil conformation. N6-acetyllysine is present on Lys-446. Residues 480–500 (GALAFAIIWPFIAQWLAHLYY) form a helical membrane-spanning segment.

It belongs to the ATG37 family.

Its subcellular location is the peroxisome membrane. Acyl-CoA binding protein which acts as the peroxisome receptor for pexophagy but is dispensable for aggrephagy and nonselective autophagy. Binds medium- and long-chain acyl-CoA esters. This chain is Acyl-CoA-binding domain-containing protein 5 (Acbd5), found in Mus musculus (Mouse).